A 467-amino-acid chain; its full sequence is ATP-dependent protease ATPase subunit HslU (467 aa).

ATP-binding positions include Val-22 and 64 to 69 (GVGKTE). The interval 149–192 (QTNNPLESLFGGAIPNFGQNNEDEEEPPTEEIKTKRSEIKRQLE) is disordered. Basic and acidic residues predominate over residues 178–192 (EEIKTKRSEIKRQLE). ATP-binding residues include Asp-280, Glu-345, and Arg-417.

Belongs to the ClpX chaperone family. HslU subfamily. In terms of assembly, a double ring-shaped homohexamer of HslV is capped on each side by a ring-shaped HslU homohexamer. The assembly of the HslU/HslV complex is dependent on binding of ATP.

The protein localises to the cytoplasm. Functionally, ATPase subunit of a proteasome-like degradation complex; this subunit has chaperone activity. The binding of ATP and its subsequent hydrolysis by HslU are essential for unfolding of protein substrates subsequently hydrolyzed by HslV. HslU recognizes the N-terminal part of its protein substrates and unfolds these before they are guided to HslV for hydrolysis. This is ATP-dependent protease ATPase subunit HslU from Staphylococcus aureus (strain bovine RF122 / ET3-1).